A 208-amino-acid polypeptide reads, in one-letter code: Translation initiation factor 6 (208 aa).

It belongs to the eIF-6 family.

In terms of biological role, binds to the 50S ribosomal subunit and prevents its association with the 30S ribosomal subunit to form the 70S initiation complex. The polypeptide is Translation initiation factor 6 (eif6) (Nanoarchaeum equitans (strain Kin4-M)).